Reading from the N-terminus, the 339-residue chain is Glycerol-3-phosphate dehydrogenase [NAD(P)+] (339 aa).

NADPH-binding residues include S15, Y16, H36, and K110. 3 residues coordinate sn-glycerol 3-phosphate: K110, G139, and T141. A143 contacts NADPH. 5 residues coordinate sn-glycerol 3-phosphate: K195, D248, S258, R259, and N260. Catalysis depends on K195, which acts as the Proton acceptor. An NADPH-binding site is contributed by R259. Residues V283 and E285 each contribute to the NADPH site.

The protein belongs to the NAD-dependent glycerol-3-phosphate dehydrogenase family.

It is found in the cytoplasm. It carries out the reaction sn-glycerol 3-phosphate + NAD(+) = dihydroxyacetone phosphate + NADH + H(+). It catalyses the reaction sn-glycerol 3-phosphate + NADP(+) = dihydroxyacetone phosphate + NADPH + H(+). It participates in membrane lipid metabolism; glycerophospholipid metabolism. Its function is as follows. Catalyzes the reduction of the glycolytic intermediate dihydroxyacetone phosphate (DHAP) to sn-glycerol 3-phosphate (G3P), the key precursor for phospholipid synthesis. The protein is Glycerol-3-phosphate dehydrogenase [NAD(P)+] of Escherichia fergusonii (strain ATCC 35469 / DSM 13698 / CCUG 18766 / IAM 14443 / JCM 21226 / LMG 7866 / NBRC 102419 / NCTC 12128 / CDC 0568-73).